Here is a 354-residue protein sequence, read N- to C-terminus: Guanine nucleotide-binding protein G(i) subunit alpha-3 (354 aa).

Glycine 2 carries N-myristoyl glycine lipidation. The S-palmitoyl cysteine moiety is linked to residue cysteine 3. The 323-residue stretch at 32–354 (KEVKLLLLGA…KNNLKECGLY (323 aa)) folds into the G-alpha domain. The tract at residues 35–48 (KLLLLGAGESGKST) is G1 motif. GTP-binding residues include glycine 42, glutamate 43, serine 44, glycine 45, lysine 46, serine 47, threonine 48, aspartate 150, serine 151, leucine 175, arginine 176, threonine 177, arginine 178, valine 179, lysine 180, threonine 181, valine 201, glycine 203, asparagine 269, lysine 270, aspartate 272, leucine 273, cysteine 325, alanine 326, and threonine 327. Serine 47 serves as a coordination point for Mg(2+). Residues 173–181 (DVLRTRVKT) are G2 motif. Threonine 181 lines the Mg(2+) pocket. Residues 196–205 (FKMFDVGGQR) are G3 motif. Residues 265–272 (ILFLNKKD) are G4 motif. Positions 324 to 329 (TCATDT) are G5 motif.

This sequence belongs to the G-alpha family. G(i/o/t/z) subfamily. Heterotrimeric G proteins are composed of 3 units; alpha, beta and gamma. The alpha subunit contains the guanine nucleotide binding site. GTP binding causes dissociation of the heterotrimer, liberating the individual subunits so that they can interact with downstream effector proteins. Forms a complex with CCDC88A/GIV and EGFR which leads to enhanced EGFR signaling and triggering of cell migration; ligand stimulation is required for recruitment of GNAI3 to the complex. Interacts (inactive GDP-bound form) with CCDC88A/GIV (via GBA motif); the interaction leads to activation of GNAI3. Interacts (inactive GDP-bound form) with CCDC88C/DAPLE (via GBA motif); the interaction leads to activation of GNAI3. Interacts (inactive GDP-bound form) with NUCB1 (via GBA motif) and NUCB2 (via GBA motif); the interaction leads to activation of GNAI3. Interacts (inactive GDP-bound form) with PLCD4 (via GBA motif); the interaction leads to activation of GNAI3. Interacts with INSR; the interaction is probably mediated by CCDC88A/GIV. Interacts with GPSM1. Interacts (GDP-bound form) with GPSM2 (via GoLoco domains). Does not interact with RGS2. Interacts with RGS8 and RGS10; this strongly enhances the intrinsic GTPase activity. Interacts with RGS16; this strongly enhances the intrinsic GTPase activity. Interacts with RGS12. Interacts (via active GTP- or inactive GDP-bound form) with RGS14. Interacts (via active GTP-bound form) with TRPC5 (via ANK repeats) in a homotetrameric ion channel; the interaction is direct and activates the channel activity. As to expression, ubiquitously expressed.

Its subcellular location is the cytoplasm. The protein resides in the cell membrane. It localises to the cytoskeleton. The protein localises to the microtubule organizing center. It is found in the centrosome. In terms of biological role, heterotrimeric guanine nucleotide-binding proteins (G proteins) function as transducers downstream of G protein-coupled receptors (GPCRs) in numerous signaling cascades. The alpha chain contains the guanine nucleotide binding site and alternates between an active, GTP-bound state and an inactive, GDP-bound state. Signaling by an activated GPCR promotes GDP release and GTP binding. The alpha subunit has a low GTPase activity that converts bound GTP to GDP, thereby terminating the signal. Both GDP release and GTP hydrolysis are modulated by numerous regulatory proteins. Signaling is mediated via effector proteins, such as adenylate cyclase. Inhibits adenylate cyclase activity, leading to decreased intracellular cAMP levels. Stimulates the activity of receptor-regulated K(+) channels. The active GTP-bound form prevents the association of RGS14 with centrosomes and is required for the translocation of RGS14 from the cytoplasm to the plasma membrane. May play a role in cell division. The active GTP-bound form activates the calcium permeant TRPC5 ion channels. This chain is Guanine nucleotide-binding protein G(i) subunit alpha-3 (GNAI3), found in Cavia porcellus (Guinea pig).